The primary structure comprises 957 residues: Melanoma-associated antigen E1 (957 aa).

The segment at 1–455 is disordered; the sequence is MSLVSQNSRR…DSEGPKGAEG (455 aa). 2 stretches are compositionally biased toward polar residues: residues 85 to 96 and 104 to 130; these read SEASSASGQPTI and VLPT…SVTL. Over residues 138–162 the composition is skewed to low complexity; the sequence is TSRPPTSSEEPSTSVPPTASEVPST. Polar residues-rich tracts occupy residues 219–244, 268–320, 329–344, 364–380, and 414–428; these read GLST…TEGL, PSTS…STSV, STSV…STSV, LSTS…DTSV, and TLFS…NPSK. MAGE domains lie at 491-690 and 745-936; these read MEQN…YNEA and LESK…YREA. An interaction with DTNA region spans residues 743–957; that stretch reads SRLESKARKL…HRQIFVHNFR (215 aa).

As to quaternary structure, interacts with DTNA. Interacts with TRIM28.

It is found in the cytoplasm. The protein resides in the perinuclear region. It localises to the nucleus. Its subcellular location is the cell membrane. May enhance ubiquitin ligase activity of RING-type zinc finger-containing E3 ubiquitin-protein ligases. Proposed to act through recruitment and/or stabilization of the Ubl-conjugating enzyme (E2) at the E3:substrate complex. This chain is Melanoma-associated antigen E1 (MAGEE1), found in Homo sapiens (Human).